Consider the following 4250-residue polypeptide: Dynein axonemal heavy chain 1 (4250 aa).

Residues 1–73 form a disordered region; the sequence is MEECNKEGPS…KSPLTGTDKK (73 aa). The segment at 1–1527 is stem; the sequence is MEECNKEGPS…YIRAVNAEFI (1527 aa). The segment covering 24 to 42 has biased composition (basic and acidic residues); sequence PESHDLEKILQESNYHPER. Over residues 46-55 the composition is skewed to pro residues; it reads NPDPKTPPLP. AAA stretches follow at residues 1528-1749, 1809-2042, 2174-2434, and 2532-2784; these read YGYE…VISA, QAIR…NTVK, TMMP…VFQG, and DYNQ…LARH. Residues 1566 to 1573 carry the GPAGTGKT motif motif; that stretch reads GPAGTGKT. ATP is bound at residue 1566–1573; that stretch reads GPAGTGKT. The short motif at 1616 to 1622 is the CFDEFNR motif element; sequence CFDEFNR. Residues 1847-1854, 2212-2219, and 2571-2578 contribute to the ATP site; these read GPTGSGKS, GPTGTGKT, and GVGGSGRS. Residues 2799–3097 form a stalk region; it reads FSILIGQKKM…EELEMKCEQC (299 aa). A coiled-coil region spans residues 3045 to 3128; the sequence is LREAQDDLEV…QETVENLENM (84 aa). AAA stretches follow at residues 3182–3412 and 3625–3844; these read LGNP…EIQA and MQDF…QLKM.

This sequence belongs to the dynein heavy chain family. In terms of assembly, consists of at least two heavy chains and a number of intermediate and light chains.

It localises to the cytoplasm. The protein localises to the cytoskeleton. The protein resides in the cilium axoneme. It is found in the cell projection. Its subcellular location is the cilium. It localises to the flagellum. Functionally, force generating protein of cilia required for sperm flagellum motility. Produces force towards the minus ends of microtubules. Dynein has ATPase activity; the force-producing power stroke is thought to occur on release of ADP. Required in spermatozoa for the formation of the inner dynein arms and biogenesis of the axoneme. This Mus musculus (Mouse) protein is Dynein axonemal heavy chain 1.